Here is a 254-residue protein sequence, read N- to C-terminus: Alcohol dehydrogenase (254 aa).

10–33 (FVAGLGGIGLDTSREIVKSGPKNL) is a binding site for NAD(+). Position 138 (Ser-138) interacts with substrate. The active-site Proton acceptor is Tyr-151.

This sequence belongs to the short-chain dehydrogenases/reductases (SDR) family. Homodimer.

It carries out the reaction a primary alcohol + NAD(+) = an aldehyde + NADH + H(+). It catalyses the reaction a secondary alcohol + NAD(+) = a ketone + NADH + H(+). This is Alcohol dehydrogenase (Adh) from Drosophila adiastola (Fruit fly).